The primary structure comprises 342 residues: MTQFNIPVTMSSSLSIILVILVSLRTALSELCNPQDKQALLQIKKDLGNPTTLSSWLPTTDCCNRTWLGVLCDTDTQTYRVNNLDLSGHNLPKPYPIPSSLANLPYLNFLYIGGINNLVGPIPPAIAKLTQLHYLYITHTNVSGAIPDFLSQIKTLVTLDFSYNALSGTLPPSISSLPNLVGITFDGNRISGAIPDSYGSFSKLFTSMTISRNRLTGKIPPTFANLNLAFVDLSRNMLQGDASVLFGSDKNTQKIHLAKNSLDFDLEKVGLSKNLNGLDLRNNRIYGTLPQGLTQLKFLHSLNVSFNNLCGEIPQGGNLQRFDVSAYANNKCLCGSPLPACT.

The signal sequence occupies residues 1–29 (MTQFNIPVTMSSSLSIILVILVSLRTALS). 2 disulfides stabilise this stretch: cysteine 32-cysteine 62 and cysteine 63-cysteine 72. A glycan (N-linked (GlcNAc...) asparagine) is linked at asparagine 64. LRR repeat units lie at residues 82 to 107 (NNLD…LPYL), 108 to 132 (NFLY…LTQL), 133 to 156 (HYLY…IKTL), 157 to 180 (VTLD…LPNL), 181 to 205 (VGIT…SKLF), 206 to 228 (TSMT…NLNL), 229 to 252 (AFVD…DKNT), 253 to 275 (QKIH…SKNL), 276 to 299 (NGLD…LKFL), and 300 to 319 (HSLN…GGNL). Asparagine 141 carries an N-linked (GlcNAc...) asparagine glycan. N-linked (GlcNAc...) asparagine glycosylation occurs at asparagine 303. Intrachain disulfides connect cysteine 310/cysteine 332 and cysteine 334/cysteine 341.

This sequence belongs to the polygalacturonase-inhibiting protein family. As to expression, found in suspension-cultured cells and to a lesser extent in hypocotyls, leaves and flowers.

It is found in the secreted. It localises to the cell wall. The protein resides in the membrane. Functionally, inhibitor of fungal polygalacturonase. It is an important factor for plant resistance to phytopathogenic fungi. This is Polygalacturonase inhibitor 3 (PGIP3) from Phaseolus vulgaris (Kidney bean).